Reading from the N-terminus, the 419-residue chain is Carbohydrate sulfotransferase 12 (419 aa).

The Cytoplasmic segment spans residues 1-5 (MTKPR). Residues 6-26 (LFRLWLVLGSALMILLIIVYW) form a helical; Signal-anchor for type II membrane protein membrane-spanning segment. The Lumenal portion of the chain corresponds to 27–419 (DNVGTAHFYL…YPKPENLLRD (393 aa)). Basic and acidic residues predominate over residues 78–87 (HNDLSRRKTE). The tract at residues 78-99 (HNDLSRRKTEQPPVPAPSKPVL) is disordered. N-linked (GlcNAc...) asparagine glycosylation occurs at N139. Position 176–182 (176–182 (PKVACTN)) interacts with 3'-phosphoadenylyl sulfate. The N-linked (GlcNAc...) asparagine glycan is linked to N214. Residue 250–258 (RDPFVRLIS) coordinates 3'-phosphoadenylyl sulfate. N-linked (GlcNAc...) asparagine glycosylation is found at N285 and N375.

Belongs to the sulfotransferase 2 family.

It is found in the golgi apparatus membrane. The enzyme catalyses chondroitin beta-D-glucuronate + n 3'-phosphoadenylyl sulfate = chondroitin 4'-sulfate + n adenosine 3',5'-bisphosphate + n H(+). Functionally, catalyzes the transfer of sulfate to position 4 of the N-acetylgalactosamine (GalNAc) residue of chondroitin and desulfated dermatan sulfate. Chondroitin sulfate constitutes the predominant proteoglycan present in cartilage and is distributed on the surfaces of many cells and extracellular matrices. Activity toward partially desulfated dermatan sulfate is however lower. Does not form 4, 6-di-O-sulfated GalNAc when chondroitin sulfate C is used as an acceptor. The polypeptide is Carbohydrate sulfotransferase 12 (Chst12) (Mus musculus (Mouse)).